A 306-amino-acid polypeptide reads, in one-letter code: tRNA dimethylallyltransferase 2 (306 aa).

11–18 (GPTASGKT) lines the ATP pocket. 13–18 (TASGKT) provides a ligand contact to substrate. Positions 36 to 39 (DSRQ) are interaction with substrate tRNA.

It belongs to the IPP transferase family. Monomer. The cofactor is Mg(2+).

It catalyses the reaction adenosine(37) in tRNA + dimethylallyl diphosphate = N(6)-dimethylallyladenosine(37) in tRNA + diphosphate. Its function is as follows. Catalyzes the transfer of a dimethylallyl group onto the adenine at position 37 in tRNAs that read codons beginning with uridine, leading to the formation of N6-(dimethylallyl)adenosine (i(6)A). In Bacteroides thetaiotaomicron (strain ATCC 29148 / DSM 2079 / JCM 5827 / CCUG 10774 / NCTC 10582 / VPI-5482 / E50), this protein is tRNA dimethylallyltransferase 2.